A 166-amino-acid polypeptide reads, in one-letter code: Glycine cleavage system H protein 3, mitochondrial (166 aa).

A mitochondrion-targeting transit peptide spans 1 to 35 (MALRMWASSTANALKLSSSASKSHLLPAFSISRCF). Positions 57–139 (VATIGITDHA…YEDGWMIKVK (83 aa)) constitute a Lipoyl-binding domain. Residue Lys-98 is modified to N6-lipoyllysine. Ser-141 bears the Phosphoserine mark.

It belongs to the GcvH family. The glycine cleavage system is composed of four proteins: P, T, L and H. (R)-lipoate is required as a cofactor. S-nitrosylated and/or glutathionylated at unknown positions in response to nitric oxide.

Its subcellular location is the mitochondrion. Inhibited by harpin, S-nitrosoglutathione (GSNO), nitric oxide, N-ethylmaleimide and 5,5'-dithiobis-(2-nitrobenzoic acid). Its function is as follows. The glycine decarboxylase (GDC) or glycine cleavage system catalyzes the degradation of glycine. The H protein shuttles the methylamine group of glycine from the P protein to the T protein. This Arabidopsis thaliana (Mouse-ear cress) protein is Glycine cleavage system H protein 3, mitochondrial (GDH3).